The chain runs to 300 residues: B1 kinase (300 aa).

A Protein kinase domain is found at Trp-16–Phe-282. Residues Ile-22–Ile-30 and Lys-45 each bind ATP. Asn-147 acts as the Proton acceptor in catalysis.

The protein belongs to the protein kinase superfamily. Ser/Thr protein kinase family. Poxviruses subfamily. As to quaternary structure, interacts with host JIP1; this interaction increases the amount of MAPK bound to JIP1 and subsequently increases the activity of transcription factors, such as JUN, that respond to these complexes. Interacts with protein OPG198; this interaction inhibits the repressive activity of OPG198 pseudokinase on viral replication factory formation. Requires Mg(2+) as cofactor. Post-translationally, autophosphorylated.

The protein localises to the virion. It is found in the host cytoplasm. The enzyme catalyses L-seryl-[protein] + ATP = O-phospho-L-seryl-[protein] + ADP + H(+). It catalyses the reaction L-threonyl-[protein] + ATP = O-phospho-L-threonyl-[protein] + ADP + H(+). Functionally, essential serine/threonine-protein kinase that plays different role in the viral life cycle. Phosphorylates the host small ribosomal protein RACK1 thereby customizing the ribosomes to a state optimal for viral mRNAs (which contain poly-A leaders) but not for host mRNAs. Facilitates viral DNA replication by inhibiting host BANF1, a cellular host defense responsive to foreign DNA. Phosphorylates host BANF1 on serine and threonine residues; this leads to BANF1 relocalization to the cytoplasm, loss of dimerization and impaired DNA binding activity. Indeed, BANF1 activity depends on its DNA-binding property which is blocked by VPK1-mediated phosphorylation. Required for viral intermediate genes expression, probably by inhibiting host BANF1. Modulates cellular responses via host JUN by two different mechanisms, either by direct phosphorylation or by modulation of upstream JIP1-MAPK complexes. Seems to participate in the accumulation/processing of late proteins and thus in virion maturation. In addition, inhibits B12 repressive activity on viral DNA replication via a phosphorylation-dependent mechanism. The sequence is that of B1 kinase (OPG187) from Homo sapiens (Human).